Consider the following 453-residue polypeptide: Growth/differentiation factor 9 (453 aa).

The signal sequence occupies residues 1-27 (MALPNKFFLWFCCFAWLCFPISLDSLP). Positions 28–318 (SRGEAQIVAR…EGVRSSRHRR (291 aa)) are excised as a propeptide. N-linked (GlcNAc...) asparagine glycosylation is found at asparagine 163, asparagine 236, asparagine 255, and asparagine 269. Positions 304–328 (GEEAAEGVRSSRHRRDQESASSELK) are disordered. The segment covering 318–328 (RDQESASSELK) has biased composition (basic and acidic residues). N-linked (GlcNAc...) asparagine glycosylation is present at asparagine 337. 3 cysteine pairs are disulfide-bonded: cysteine 352–cysteine 418, cysteine 381–cysteine 450, and cysteine 385–cysteine 452.

It belongs to the TGF-beta family. Homodimer or heterodimer (Potential). But, in contrast to other members of this family, cannot be disulfide-linked. In terms of processing, phosphorylated; phosphorylation is critical for GDF9 function.

The protein resides in the secreted. Required for ovarian folliculogenesis. The polypeptide is Growth/differentiation factor 9 (GDF9) (Ovis aries (Sheep)).